Here is a 245-residue protein sequence, read N- to C-terminus: NAD-dependent protein deacetylase (245 aa).

The region spanning 1–245 is the Deacetylase sirtuin-type domain; that stretch reads MIFVQQFEEV…EFVEGLSSIK (245 aa). NAD(+) is bound by residues Ala26, Thr30, Phe37, Arg38, Gln105, Ile107, Asp108, and His123. Phe37 serves as a coordination point for nicotinamide. Nicotinamide contacts are provided by Ile107 and Asp108. Catalysis depends on His123, which acts as the Proton acceptor. 4 residues coordinate Zn(2+): Cys131, Cys134, Cys151, and Cys154. Residues Thr190, Ser191, Asn216, and Ile234 each coordinate NAD(+).

This sequence belongs to the sirtuin family. Class U subfamily. Zn(2+) serves as cofactor.

The protein resides in the cytoplasm. The enzyme catalyses N(6)-acetyl-L-lysyl-[protein] + NAD(+) + H2O = 2''-O-acetyl-ADP-D-ribose + nicotinamide + L-lysyl-[protein]. Its function is as follows. NAD-dependent protein deacetylase which modulates the activities of several enzymes which are inactive in their acetylated form. The polypeptide is NAD-dependent protein deacetylase (Bacillus thuringiensis subsp. konkukian (strain 97-27)).